A 622-amino-acid polypeptide reads, in one-letter code: Chaperone protein HtpG (622 aa).

The tract at residues 1–322 is a; substrate-binding; that stretch reads MTEAKNYEFQ…SEDLPLNISR (322 aa). The interval 323 to 539 is b; sequence QSLQDNALVS…DGFMSASMER (217 aa). Residues 540-622 form a c region; that stretch reads VLAASRKEQG…KILDRAVSRA (83 aa).

Belongs to the heat shock protein 90 family. In terms of assembly, homodimer.

The protein resides in the cytoplasm. In terms of biological role, molecular chaperone. Has ATPase activity. This chain is Chaperone protein HtpG, found in Desulfotalea psychrophila (strain LSv54 / DSM 12343).